The following is a 631-amino-acid chain: MPTTFQEIPRERPVTPLLDRADTPAGLRRLAEADLEHLADELRQELLYTVGQTGGHFGAGLGVIELTIALHYVFDTPDDRLVWDVGHQAYPHKILTGRRNRMLSLRQKDGIAAFPRRSESEYDTFGVGHSSTSISAALGMAIAARLQNSARKSIAVIGDGALTAGMAFEALNHAQEVNADMLVILNDNDMSISRNVGGLSNYLAKILSSRTYASMREGSKKVLSRLPGAWEIARRTEEYAKGMLVPGTLFEELGWNYIGPIDGHDLPTMIATLRNMRDLKGPQFLHVVTKKGKGFAPAEIDPIGYHAITKLEPADKPAAPKKASGPKYSAVFGQWLCDMAAADNRLVGITPAMKEGSDLVAFSERYPERYFDVAIAEQHAVTLAAGMACEGSKPVVAIYSTFLQRAYDQLIHDVAVQNLDVLFAIDRAGLVGEDGPTHAGSYDLSYLRCIPGMLVMTPSDENELRKMLSTGHLYNGPAAVRYPRGTGPNAPISGDLEPLEIGKGVIRRQGEKVALLVFGVQLAEALQVAEQINATVVDMRFVKPLDEALVLELAGSHALLVTLEENAIMGGAGAAVGEFLASQAVIKPLLHLGLPDIYVEHAKPAQMLAECGLDAAGIEASVKARMAKLGL.

Thiamine diphosphate is bound by residues H87 and 128–130 (GHS). D159 is a Mg(2+) binding site. Residues 160 to 161 (GA), N188, F295, and E377 contribute to the thiamine diphosphate site. N188 contributes to the Mg(2+) binding site.

The protein belongs to the transketolase family. DXPS subfamily. Homodimer. The cofactor is Mg(2+). Thiamine diphosphate is required as a cofactor.

The enzyme catalyses D-glyceraldehyde 3-phosphate + pyruvate + H(+) = 1-deoxy-D-xylulose 5-phosphate + CO2. The protein operates within metabolic intermediate biosynthesis; 1-deoxy-D-xylulose 5-phosphate biosynthesis; 1-deoxy-D-xylulose 5-phosphate from D-glyceraldehyde 3-phosphate and pyruvate: step 1/1. Its function is as follows. Catalyzes the acyloin condensation reaction between C atoms 2 and 3 of pyruvate and glyceraldehyde 3-phosphate to yield 1-deoxy-D-xylulose-5-phosphate (DXP). In Pseudomonas putida (strain W619), this protein is 1-deoxy-D-xylulose-5-phosphate synthase.